Consider the following 118-residue polypeptide: Large ribosomal subunit protein bL19 (118 aa).

Belongs to the bacterial ribosomal protein bL19 family.

Functionally, this protein is located at the 30S-50S ribosomal subunit interface and may play a role in the structure and function of the aminoacyl-tRNA binding site. The polypeptide is Large ribosomal subunit protein bL19 (Citrifermentans bemidjiense (strain ATCC BAA-1014 / DSM 16622 / JCM 12645 / Bem) (Geobacter bemidjiensis)).